We begin with the raw amino-acid sequence, 263 residues long: Small ribosomal subunit protein uS3 (263 aa).

Residues valine 39–arginine 107 form the KH type-2 domain. The disordered stretch occupies residues glycine 211–glutamate 263. Residues threonine 219 to arginine 240 are compositionally biased toward basic and acidic residues.

The protein belongs to the universal ribosomal protein uS3 family. In terms of assembly, part of the 30S ribosomal subunit. Forms a tight complex with proteins S10 and S14.

Binds the lower part of the 30S subunit head. Binds mRNA in the 70S ribosome, positioning it for translation. In Bordetella petrii (strain ATCC BAA-461 / DSM 12804 / CCUG 43448), this protein is Small ribosomal subunit protein uS3.